The chain runs to 257 residues: Small ribosomal subunit protein eS1 (257 aa).

The segment at 236 to 257 is disordered; that stretch reads TSAEGEKIERPDDYEPPVQESV. Residues 239–248 show a composition bias toward basic and acidic residues; sequence EGEKIERPDD.

This sequence belongs to the eukaryotic ribosomal protein eS1 family. Component of the small ribosomal subunit. Mature ribosomes consist of a small (40S) and a large (60S) subunit. The 40S subunit contains about 33 different proteins and 1 molecule of RNA (18S). The 60S subunit contains about 49 different proteins and 3 molecules of RNA (28S, 5.8S and 5S).

It localises to the cytoplasm. The polypeptide is Small ribosomal subunit protein eS1 (Brugia malayi (Filarial nematode worm)).